Consider the following 324-residue polypeptide: NADH-quinone oxidoreductase subunit H (324 aa).

8 helical membrane-spanning segments follow: residues 11–31 (ILITVGKAVVILLVVVTCGAF), 81–101 (VIFTLAPMIAFTSMLIAFAIV), 114–134 (IGILFFLMMAGLAVYAVLFAG), 154–174 (VSYEVFIGLSLMGVVAQAGSF), 186–206 (LWNVIPQFFGFITFAIAGVAV), 237–257 (FFVGEYIGIVTVSALMVTLFF), 265–285 (LPPFVWFALKTGFFMMMFILI), and 304–324 (VCLPITLLNLLATAAVILYNA).

Belongs to the complex I subunit 1 family. In terms of assembly, NDH-1 is composed of 13 different subunits. Subunits NuoA, H, J, K, L, M, N constitute the membrane sector of the complex.

The protein localises to the cell inner membrane. The catalysed reaction is a quinone + NADH + 5 H(+)(in) = a quinol + NAD(+) + 4 H(+)(out). Its function is as follows. NDH-1 shuttles electrons from NADH, via FMN and iron-sulfur (Fe-S) centers, to quinones in the respiratory chain. The immediate electron acceptor for the enzyme in this species is believed to be ubiquinone. Couples the redox reaction to proton translocation (for every two electrons transferred, four hydrogen ions are translocated across the cytoplasmic membrane), and thus conserves the redox energy in a proton gradient. This subunit may bind ubiquinone. The protein is NADH-quinone oxidoreductase subunit H of Pectobacterium atrosepticum (strain SCRI 1043 / ATCC BAA-672) (Erwinia carotovora subsp. atroseptica).